A 205-amino-acid polypeptide reads, in one-letter code: Glycerol-3-phosphate acyltransferase (205 aa).

6 helical membrane-spanning segments follow: residues 7–27, 54–74, 80–100, 116–136, 141–161, and 163–183; these read MTAL…VWVC, VVPA…VLWV, LPIW…SYPL, VLLM…ALLA, TAAV…YWLA, and EATL…AWNI.

The protein belongs to the PlsY family. As to quaternary structure, probably interacts with PlsX.

It localises to the cell inner membrane. The catalysed reaction is an acyl phosphate + sn-glycerol 3-phosphate = a 1-acyl-sn-glycero-3-phosphate + phosphate. Its pathway is lipid metabolism; phospholipid metabolism. Functionally, catalyzes the transfer of an acyl group from acyl-phosphate (acyl-PO(4)) to glycerol-3-phosphate (G3P) to form lysophosphatidic acid (LPA). This enzyme utilizes acyl-phosphate as fatty acyl donor, but not acyl-CoA or acyl-ACP. The chain is Glycerol-3-phosphate acyltransferase from Chromohalobacter salexigens (strain ATCC BAA-138 / DSM 3043 / CIP 106854 / NCIMB 13768 / 1H11).